The chain runs to 158 residues: MKALYPGSFDPLTFGHLDLIQRGSDLFGEVLIAVLENPSKKATFSCKRRIEQIENATKDIPGCRTIAFKGLTVDCARENNADLILRGLRAMSDFEYELQVAHTNRSLNNQYETIFLATETHHSFLSSSVVKEVARFGGEIRHMVPEFIAKDLMKLNTN.

Ser-8 contacts substrate. Residues 8–9 (SF) and His-16 contribute to the ATP site. Substrate contacts are provided by Lys-40, Thr-72, and Arg-86. ATP contacts are provided by residues 87-89 (GLR), Glu-97, and 122-128 (HSFLSSS).

It belongs to the bacterial CoaD family. As to quaternary structure, homohexamer. Requires Mg(2+) as cofactor.

It localises to the cytoplasm. The enzyme catalyses (R)-4'-phosphopantetheine + ATP + H(+) = 3'-dephospho-CoA + diphosphate. Its pathway is cofactor biosynthesis; coenzyme A biosynthesis; CoA from (R)-pantothenate: step 4/5. Its function is as follows. Reversibly transfers an adenylyl group from ATP to 4'-phosphopantetheine, yielding dephospho-CoA (dPCoA) and pyrophosphate. The protein is Phosphopantetheine adenylyltransferase of Prochlorococcus marinus (strain NATL1A).